We begin with the raw amino-acid sequence, 753 residues long: Probable dipeptidyl peptidase 4 (753 aa).

A signal peptide spans 1-18 (MKTSQFLSLLLLAGIAQA). 3 N-linked (GlcNAc...) asparagine glycosylation sites follow: asparagine 84, asparagine 114, and asparagine 222. Residues serine 616, aspartate 668, and histidine 703 each act as charge relay system in the active site.

It belongs to the peptidase S9B family.

The protein resides in the secreted. It catalyses the reaction Release of an N-terminal dipeptide, Xaa-Yaa-|-Zaa-, from a polypeptide, preferentially when Yaa is Pro, provided Zaa is neither Pro nor hydroxyproline.. Its function is as follows. Extracellular dipeptidyl-peptidase which removes N-terminal dipeptides sequentially from polypeptides having unsubstituted N-termini provided that the penultimate residue is proline. Contributes to pathogenicity. The protein is Probable dipeptidyl peptidase 4 (DPP4) of Trichophyton verrucosum (strain HKI 0517).